The chain runs to 315 residues: Olfactory receptor 3A1 (315 aa).

The Extracellular segment spans residues 1–28 (MQPESGANGTVIAEFILLGLLEAPGLQP). A glycan (N-linked (GlcNAc...) asparagine) is linked at N8. The chain crosses the membrane as a helical span at residues 29-52 (VVFVLFLFAYLVTVRGNLSILAAV). The Cytoplasmic portion of the chain corresponds to 53–60 (LVEPKLHT). A helical transmembrane segment spans residues 61–82 (PMYFFLGNLSVLDVGCISVTVP). At 83–103 (SMLSRLLSRKRAVPCGACLTQ) the chain is on the extracellular side. C100 and C192 are disulfide-bonded. A helical membrane pass occupies residues 104-123 (LFFFHLFVGVDCFLLTAMAY). The Cytoplasmic portion of the chain corresponds to 124-143 (DRFLAICRPLTYSTRMSQTV). A helical transmembrane segment spans residues 144–161 (QRMLVAASWACAFTNALT). At 162 to 199 (HTVAMSTLNFCGPNVINHFYCDLPQLFQLSCSSTQLNE) the chain is on the extracellular side. The chain crosses the membrane as a helical span at residues 200-223 (LLLFAVGFIMAGTPMALIVISYIH). The Cytoplasmic portion of the chain corresponds to 224–240 (VAAAVLRIRSVEGRKKA). The chain crosses the membrane as a helical span at residues 241 to 264 (FSTCGSHLTVVAIFYGSGIFNYMR). Over 265–275 (LGSTKLSDKDK) the chain is Extracellular. The chain crosses the membrane as a helical span at residues 276–295 (AVGIFNTVINPMLNPIIYSF). The Cytoplasmic segment spans residues 296–315 (RNPDVQSAIWRMLTGRRSLA).

It belongs to the G-protein coupled receptor 1 family.

Its subcellular location is the cell membrane. In terms of biological role, odorant receptor. The sequence is that of Olfactory receptor 3A1 (OR3A1) from Homo sapiens (Human).